The chain runs to 334 residues: Cytosolic Fe-S cluster assembly factor NBP35 (334 aa).

4 residues coordinate [4Fe-4S] cluster: Cys-33, Cys-47, Cys-50, and Cys-56. 86–93 (GKGGVGKS) is an ATP binding site. Residues Cys-259 and Cys-262 each coordinate [4Fe-4S] cluster.

Belongs to the Mrp/NBP35 ATP-binding proteins family. NUBP1/NBP35 subfamily. As to quaternary structure, heterotetramer of 2 NBP35 and 2 CFD1 chains. [4Fe-4S] cluster is required as a cofactor.

Its subcellular location is the cytoplasm. The protein resides in the nucleus. In terms of biological role, component of the cytosolic iron-sulfur (Fe/S) protein assembly (CIA) machinery. Required for maturation of extramitochondrial Fe-S proteins. The NBP35-CFD1 heterotetramer forms a Fe-S scaffold complex, mediating the de novo assembly of an Fe-S cluster and its transfer to target apoproteins. Required for biogenesis and export of both ribosomal subunits, which may reflect a role in assembly of the Fe/S clusters in RLI1, a protein which performs rRNA processing and ribosome export. In Candida glabrata (strain ATCC 2001 / BCRC 20586 / JCM 3761 / NBRC 0622 / NRRL Y-65 / CBS 138) (Yeast), this protein is Cytosolic Fe-S cluster assembly factor NBP35.